Consider the following 855-residue polypeptide: DNA replication helicase (855 aa).

ATP is bound at residue 78–85; it reads GNAGSGKS.

It belongs to the herpesviridae helicase family. Associates with the primase and the primase-associated factor to form the helicase-primase complex.

Its subcellular location is the host nucleus. In terms of biological role, component of the helicase/primase complex. Unwinds the DNA at the replication forks and generates single-stranded DNA for both leading and lagging strand synthesis. The primase synthesizes short RNA primers on the lagging strand that the polymerase elongates using dNTPs. Possesses helicase-like motifs and therefore may act as the helicase subunit of the complex. The protein is DNA replication helicase of Amazona oratrix (yellow-headed parrot).